Reading from the N-terminus, the 285-residue chain is ATP synthase gamma chain (285 aa).

Belongs to the ATPase gamma chain family. F-type ATPases have 2 components, CF(1) - the catalytic core - and CF(0) - the membrane proton channel. CF(1) has five subunits: alpha(3), beta(3), gamma(1), delta(1), epsilon(1). CF(0) has three main subunits: a, b and c.

It localises to the cell membrane. Produces ATP from ADP in the presence of a proton gradient across the membrane. The gamma chain is believed to be important in regulating ATPase activity and the flow of protons through the CF(0) complex. This Exiguobacterium sp. (strain ATCC BAA-1283 / AT1b) protein is ATP synthase gamma chain.